Consider the following 34-residue polypeptide: Turripeptide Pal9a (34 aa).

3 disulfides stabilise this stretch: Cys-3–Cys-17, Cys-8–Cys-19, and Cys-13–Cys-30. At Gln-34 the chain carries Glutamine amide.

Expressed by the venom duct.

The protein resides in the secreted. This is Turripeptide Pal9a from Polystira albida (White giant-turris).